The sequence spans 210 residues: Fibroblast growth factor 21 (210 aa).

The signal sequence occupies residues M1 to Q28. The disordered stretch occupies residues P144–S210.

This sequence belongs to the heparin-binding growth factors family. In terms of assembly, interacts (via C-terminus) with KLB; this interaction is direct. Interacts with FGFR4. In terms of tissue distribution, most abundantly expressed in the liver, also expressed in the thymus at lower levels. Expressed in skeletal muscle (at protein level). Secreted in plasma (at protein level).

The protein localises to the secreted. Functionally, stimulates glucose uptake in differentiated adipocytes via the induction of glucose transporter SLC2A1/GLUT1 expression (but not SLC2A4/GLUT4 expression). Activity probably requires the presence of KLB. Regulates systemic glucose homeostasis and insulin sensitivity. This chain is Fibroblast growth factor 21 (Fgf21), found in Mus musculus (Mouse).